Here is a 669-residue protein sequence, read N- to C-terminus: CoB--CoM heterodisulfide reductase iron-sulfur subunit A 1 (669 aa).

Glycine 153–glutamate 176 is an FAD binding site. A non-standard amino acid (selenocysteine) is located at residue selenocysteine 200. 4 4Fe-4S ferredoxin-type domains span residues lysine 239–glycine 270, leucine 287–glutamate 318, isoleucine 584–lysine 613, and arginine 617–tyrosine 646. Positions 249, 252, 255, 259, 296, 299, 302, 306, 593, 596, 599, 603, 626, 629, 632, and 636 each coordinate [4Fe-4S] cluster.

It belongs to the HdrA family. The ferredoxin:CoB-CoM heterodisulfide reductase is composed of three subunits; HdrA, HdrB and HdrC. Requires [4Fe-4S] cluster as cofactor. FAD serves as cofactor.

It functions in the pathway cofactor metabolism; coenzyme M-coenzyme B heterodisulfide reduction; coenzyme B and coenzyme M from coenzyme M-coenzyme B heterodisulfide: step 1/1. In terms of biological role, part of a complex that catalyzes the reversible reduction of CoM-S-S-CoB to the thiol-coenzymes H-S-CoM (coenzyme M) and H-S-CoB (coenzyme B). In Methanopyrus kandleri (strain AV19 / DSM 6324 / JCM 9639 / NBRC 100938), this protein is CoB--CoM heterodisulfide reductase iron-sulfur subunit A 1 (hdrA1).